The primary structure comprises 488 residues: Probable glycine dehydrogenase (decarboxylating) subunit 2 (488 aa).

Lys274 carries the N6-(pyridoxal phosphate)lysine modification.

The protein belongs to the GcvP family. C-terminal subunit subfamily. In terms of assembly, the glycine cleavage system is composed of four proteins: P, T, L and H. In this organism, the P 'protein' is a heterodimer of two subunits. The cofactor is pyridoxal 5'-phosphate.

It catalyses the reaction N(6)-[(R)-lipoyl]-L-lysyl-[glycine-cleavage complex H protein] + glycine + H(+) = N(6)-[(R)-S(8)-aminomethyldihydrolipoyl]-L-lysyl-[glycine-cleavage complex H protein] + CO2. In terms of biological role, the glycine cleavage system catalyzes the degradation of glycine. The P protein binds the alpha-amino group of glycine through its pyridoxal phosphate cofactor; CO(2) is released and the remaining methylamine moiety is then transferred to the lipoamide cofactor of the H protein. In Listeria monocytogenes serotype 4b (strain F2365), this protein is Probable glycine dehydrogenase (decarboxylating) subunit 2.